Here is a 336-residue protein sequence, read N- to C-terminus: uncharacterized protein (336 aa).

This is an uncharacterized protein from Mycoplasma capricolum subsp. capricolum (strain California kid / ATCC 27343 / NCTC 10154).